A 246-amino-acid chain; its full sequence is E3 ubiquitin-protein ligase MARCHF2 (246 aa).

An RING-CH-type zinc finger spans residues Asp56–Glu116. 8 residues coordinate Zn(2+): Cys64, Cys67, Cys80, Cys82, His90, Cys93, Cys106, and Cys109. Residues Pro121–Val246 are required for interaction with IKBKG. 2 consecutive transmembrane segments (helical) span residues Leu138–Leu158 and Ala175–Val195.

In terms of assembly, interacts with STX6; the interaction promotes MARCHF2-mediated ubiquitination and degradation of CFTR. Interacts with MARCHF3. Interacts with GOPC/CAL; the interaction leads to CFTR ubiquitination and degradation. Interacts with CFTR; the interaction leads to CFTR ubiqtuitination and degradation. Interacts (via PDZ domain) with DLG1 (via PDZ domains); the interaction leads to DLG1 ubiqtuitination and degradation. Interacts with ERGIC3. Interacts with ADRB2. Interacts with IKBKG/NEMO; during the late stages of macrophage viral and bacterial infection; the interaction leads to ubiquitination and degradation of IKBKG/NEMO.

It is found in the endoplasmic reticulum membrane. The protein localises to the lysosome membrane. It localises to the endosome membrane. The protein resides in the golgi apparatus membrane. Its subcellular location is the cytoplasm. It is found in the cell membrane. The enzyme catalyses S-ubiquitinyl-[E2 ubiquitin-conjugating enzyme]-L-cysteine + [acceptor protein]-L-lysine = [E2 ubiquitin-conjugating enzyme]-L-cysteine + N(6)-ubiquitinyl-[acceptor protein]-L-lysine.. It functions in the pathway protein modification; protein ubiquitination. Its function is as follows. E3 ubiquitin-protein ligase that may mediate ubiquitination of TFRC and CD86, and promote their subsequent endocytosis and sorting to lysosomes via multivesicular bodies. E3 ubiquitin ligases accept ubiquitin from an E2 ubiquitin-conjugating enzyme in the form of a thioester and then directly transfer the ubiquitin to targeted substrates. Together with GOPC/CAL mediates the ubiquitination and lysosomal degradation of CFTR. Ubiquitinates and therefore mediates the degradation of DLG1. Regulates the intracellular trafficking and secretion of alpha1-antitrypsin/SERPINA1 and HP/haptoglobin via ubiquitination and degradation of the cargo receptor ERGIC3. Negatively regulates the antiviral and antibacterial immune response by repression of the NF-kB and type 1 IFN signaling pathways, via MARCHF2-mediated K48-linked polyubiquitination of IKBKG/NEMO, resulting in its proteasomal degradation. May be involved in endosomal trafficking through interaction with STX6. This is E3 ubiquitin-protein ligase MARCHF2 (Marchf2) from Mus musculus (Mouse).